The following is a 141-amino-acid chain: Lysozyme P (141 aa).

Residues 1–18 form the signal peptide; the sequence is MKAFLVICALTLTAVATQ. The C-type lysozyme domain maps to 20-141; sequence RTMDRCSLAR…GSLPSINSCF (122 aa). Cystine bridges form between Cys25/Cys140, Cys46/Cys130, Cys81/Cys97, and Cys93/Cys111. Catalysis depends on residues Glu51 and Asp69.

Belongs to the glycosyl hydrolase 22 family. Salivary gland.

The catalysed reaction is Hydrolysis of (1-&gt;4)-beta-linkages between N-acetylmuramic acid and N-acetyl-D-glucosamine residues in a peptidoglycan and between N-acetyl-D-glucosamine residues in chitodextrins.. Functionally, unlikely to play an active role in the humoral immune defense. May have a function in the digestion of bacteria in the food. The polypeptide is Lysozyme P (LysP) (Drosophila melanogaster (Fruit fly)).